The following is a 203-amino-acid chain: Large ribosomal subunit protein bL25 (203 aa).

The protein belongs to the bacterial ribosomal protein bL25 family. CTC subfamily. As to quaternary structure, part of the 50S ribosomal subunit; part of the 5S rRNA/L5/L18/L25 subcomplex. Contacts the 5S rRNA. Binds to the 5S rRNA independently of L5 and L18.

This is one of the proteins that binds to the 5S RNA in the ribosome where it forms part of the central protuberance. The protein is Large ribosomal subunit protein bL25 of Rickettsia peacockii (strain Rustic).